The primary structure comprises 475 residues: ADP-ribose glycohydrolase MACROD2 (475 aa).

The 182-residue stretch at Gln-59–Phe-240 folds into the Macro domain. Residues Gly-77–Ile-79, Ala-90–Asn-92, and Gly-97–Asp-102 contribute to the substrate site. Lys-170 is covalently cross-linked (Glycyl lysine isopeptide (Lys-Gly) (interchain with G-Cter in ubiquitin)). Substrate contacts are provided by residues Ile-185–Gly-191 and Phe-224. 2 disordered regions span residues Pro-241–Ala-306 and Gly-324–Gln-475. Composition is skewed to basic and acidic residues over residues Ala-251 to Glu-261 and Ser-335 to Met-359. Positions Thr-360 to Asn-375 are enriched in polar residues. Basic and acidic residues predominate over residues Asp-376–Ala-386. Composition is skewed to polar residues over residues Glu-387–Gln-402 and Ser-440–Ser-469.

Belongs to the MacroD-type family. MacroD1/2-like subfamily. In terms of assembly, interacts with ADP-ribosylated PARP1. Expressed in the kidney.

It localises to the nucleus. The enzyme catalyses 2''-O-acetyl-ADP-D-ribose + H2O = ADP-D-ribose + acetate + H(+). The catalysed reaction is 4-O-(ADP-D-ribosyl)-L-aspartyl-[protein] + H2O = L-aspartyl-[protein] + ADP-D-ribose + H(+). It catalyses the reaction 5-O-(ADP-D-ribosyl)-L-glutamyl-[protein] + H2O = L-glutamyl-[protein] + ADP-D-ribose + H(+). It carries out the reaction alpha-NAD(+) + H2O = ADP-D-ribose + nicotinamide + H(+). Its activity is regulated as follows. Subject to product inhibition by ADP-ribose. Removes ADP-ribose from aspartate and glutamate residues in proteins bearing a single ADP-ribose moiety. Inactive towards proteins bearing poly-ADP-ribose. Deacetylates O-acetyl-ADP ribose, a signaling molecule generated by the deacetylation of acetylated lysine residues in histones and other proteins. The sequence is that of ADP-ribose glycohydrolase MACROD2 from Mus musculus (Mouse).